Reading from the N-terminus, the 256-residue chain is Thiazole synthase (256 aa).

K95 (schiff-base intermediate with DXP) is an active-site residue. 1-deoxy-D-xylulose 5-phosphate contacts are provided by residues G156, 182–183 (AG), and 204–205 (NT).

It belongs to the ThiG family. Homotetramer. Forms heterodimers with either ThiH or ThiS.

Its subcellular location is the cytoplasm. The enzyme catalyses [ThiS sulfur-carrier protein]-C-terminal-Gly-aminoethanethioate + 2-iminoacetate + 1-deoxy-D-xylulose 5-phosphate = [ThiS sulfur-carrier protein]-C-terminal Gly-Gly + 2-[(2R,5Z)-2-carboxy-4-methylthiazol-5(2H)-ylidene]ethyl phosphate + 2 H2O + H(+). The protein operates within cofactor biosynthesis; thiamine diphosphate biosynthesis. Catalyzes the rearrangement of 1-deoxy-D-xylulose 5-phosphate (DXP) to produce the thiazole phosphate moiety of thiamine. Sulfur is provided by the thiocarboxylate moiety of the carrier protein ThiS. In vitro, sulfur can be provided by H(2)S. The sequence is that of Thiazole synthase from Escherichia coli O127:H6 (strain E2348/69 / EPEC).